Here is a 172-residue protein sequence, read N- to C-terminus: MDLTNYIASIKDYPKAGITFRDISPLMADGKAYSYAIREIAQYACDKDIDMVVGPEARGFIIGCPVAVELGIGFAPVRKPGKLPRDVVSADYEKEYGLDTLTMHADAIKPGQRVLIVDDLLATGGTVKATIEMIEKLGGIVAGCAFLIELEGLNGRHAIRNYDYKVLMQFPG.

It belongs to the purine/pyrimidine phosphoribosyltransferase family. As to quaternary structure, homodimer.

The protein localises to the cytoplasm. It carries out the reaction AMP + diphosphate = 5-phospho-alpha-D-ribose 1-diphosphate + adenine. It functions in the pathway purine metabolism; AMP biosynthesis via salvage pathway; AMP from adenine: step 1/1. Its function is as follows. Catalyzes a salvage reaction resulting in the formation of AMP, that is energically less costly than de novo synthesis. This chain is Adenine phosphoribosyltransferase, found in Streptococcus pyogenes serotype M12 (strain MGAS9429).